A 342-amino-acid chain; its full sequence is P21 prophage-derived major head protein (342 aa).

This sequence belongs to the lambda phage major capsid protein family.

The protein is P21 prophage-derived major head protein of Escherichia coli O6:H1 (strain CFT073 / ATCC 700928 / UPEC).